Here is a 661-residue protein sequence, read N- to C-terminus: NUAK family SNF1-like kinase 1 (661 aa).

Methionine 1 bears the N-acetylmethionine mark. The tract at residues 1-24 is disordered; sequence MEGAAAPVAGDRPDLGLGAPGSPR. Serine 22 carries the phosphoserine modification. Residues 55–306 form the Protein kinase domain; sequence YELQETLGKG…IEDIANHWWV (252 aa). Residues 61-69 and lysine 84 contribute to the ATP site; that span reads LGKGTYGKV. Residue aspartate 178 is the Proton acceptor of the active site. Threonine 211 is subject to Phosphothreonine; by LKB1. Disordered stretches follow at residues 345 to 421 and 442 to 570; these read TEAK…EGVV and LPSS…RPSS. Residues 393–404 are compositionally biased toward basic residues; sequence SSKRPKGILKKR. The GILK motif motif lies at 399–402; sequence GILK. Serine 455 is subject to Phosphoserine. Residues 518–529 are compositionally biased toward basic residues; sequence SCRRKGILKHSS. Serine 600 carries the phosphoserine; by PKB/AKT1 modification.

The protein belongs to the protein kinase superfamily. CAMK Ser/Thr protein kinase family. SNF1 subfamily. Interacts (via GILK motif) with PPP1CB; the interaction is direct and bridges NUAK1 and PPP1R12A. Interacts with CDKN1A. Requires Mg(2+) as cofactor. Ubiquitinated with 'Lys-29'- and 'Lys-33'-linked polyubiquitins which appear to impede LKB1-mediated phosphorylation. Deubiquitinated by USP9X. Post-translationally, phosphorylated at Thr-211 by STK11/LKB1 in complex with STE20-related adapter-alpha (STRADA) pseudo kinase and CAB39. Not dephosphorylated by the myosin PP1 complex when regulating its activity, due to the presence of PPP1R12A, which prevents myosin PP1 from dephosphorylating NUAK1. Phosphorylated by STK38L upon stimulation with IGF1. As to expression, expressed at high levels in heart and brain, and at lower levels in skeletal muscle, kidney, ovary, placenta, lung and liver. Highly up-regulated in colorectal cancer cell lines.

Its subcellular location is the nucleus. The protein localises to the cytoplasm. It catalyses the reaction L-seryl-[protein] + ATP = O-phospho-L-seryl-[protein] + ADP + H(+). It carries out the reaction L-threonyl-[protein] + ATP = O-phospho-L-threonyl-[protein] + ADP + H(+). Its activity is regulated as follows. Activated by phosphorylation on Thr-211. Activated by phosphorylation at Ser-600 AKT1 during glucose starvation; the relevance of such activation in normal cells is however unsure. Serine/threonine-protein kinase involved in various processes such as cell adhesion, regulation of cell ploidy and senescence, cell proliferation and tumor progression. Phosphorylates ATM, CASP6, LATS1, PPP1R12A and p53/TP53. Acts as a regulator of cellular senescence and cellular ploidy by mediating phosphorylation of 'Ser-464' of LATS1, thereby controlling its stability. Controls cell adhesion by regulating activity of the myosin protein phosphatase 1 (PP1) complex. Acts by mediating phosphorylation of PPP1R12A subunit of myosin PP1: phosphorylated PPP1R12A then interacts with 14-3-3, leading to reduced dephosphorylation of myosin MLC2 by myosin PP1. May be involved in DNA damage response: phosphorylates p53/TP53 at 'Ser-15' and 'Ser-392' and is recruited to the CDKN1A/WAF1 promoter to participate in transcription activation by p53/TP53. May also act as a tumor malignancy-associated factor by promoting tumor invasion and metastasis under regulation and phosphorylation by AKT1. Suppresses Fas-induced apoptosis by mediating phosphorylation of CASP6, thereby suppressing the activation of the caspase and the subsequent cleavage of CFLAR. Regulates UV radiation-induced DNA damage response mediated by CDKN1A. In association with STK11, phosphorylates CDKN1A in response to UV radiation and contributes to its degradation which is necessary for optimal DNA repair. The polypeptide is NUAK family SNF1-like kinase 1 (NUAK1) (Homo sapiens (Human)).